The primary structure comprises 445 residues: Cryptochrome DASH (445 aa).

The 134-residue stretch at 4-137 folds into the Photolyase/cryptochrome alpha/beta domain; the sequence is KIGLYWFTFD…VIVQHSVRSL (134 aa).

Belongs to the DNA photolyase class-1 family. FAD serves as cofactor. (6R)-5,10-methylene-5,6,7,8-tetrahydrofolate is required as a cofactor.

In terms of biological role, may have a photoreceptor function. Binds DNA; probably functions as a transcriptional repressor. The polypeptide is Cryptochrome DASH (cry) (Vibrio parahaemolyticus serotype O3:K6 (strain RIMD 2210633)).